The chain runs to 231 residues: NADH-ubiquinone oxidoreductase chain 4 (231 aa).

6 helical membrane-spanning segments follow: residues 1–21 (PIAG…YGII), 34–54 (TFLP…LTCL), 61–80 (SLIA…AIII), 84–106 (WGLS…LFCL), 118–138 (ILIL…WWLL), and 156–178 (LLIM…LSML).

Belongs to the complex I subunit 4 family.

The protein resides in the mitochondrion membrane. It carries out the reaction a ubiquinone + NADH + 5 H(+)(in) = a ubiquinol + NAD(+) + 4 H(+)(out). Functionally, core subunit of the mitochondrial membrane respiratory chain NADH dehydrogenase (Complex I) that is believed to belong to the minimal assembly required for catalysis. Complex I functions in the transfer of electrons from NADH to the respiratory chain. The immediate electron acceptor for the enzyme is believed to be ubiquinone. The protein is NADH-ubiquinone oxidoreductase chain 4 (MT-ND4) of Trimeresurus albolabris (White-lipped pit viper).